Reading from the N-terminus, the 439-residue chain is Histone acetyltransferase ESA1 (439 aa).

Positions 23–73 constitute a Tudor-knot domain; it reads VGCKSWVLKDGQDRLAEILSINSRRDPPKFYVHYEDFNKRLDEWITADRLQ. The interval 83–120 is disordered; that stretch reads PKELEEKKDSKKKKQQQNKSATPQAASATPDGGDVMDL. The MYST-type HAT domain maps to 156–427; sequence ARVRNLNKVI…IDPQKLIWTP (272 aa). The C2HC MYST-type; degenerate zinc-finger motif lies at 189–214; sequence VYIDDFSLQYFGSKKQYERYRKKCTL. Positions 239–260 match the ESA1-RPD3 motif motif; sequence RTWCRNLCLLSKLFLDHKTLYY. Lysine 256 carries the N6-acetyllysine; by autocatalysis modification. Acetyl-CoA-binding positions include 297-301 and 306-312; these read ACILT and QRMGYGR. The active-site Proton donor/acceptor is glutamate 332. An acetyl-CoA-binding site is contributed by serine 336.

Belongs to the MYST (SAS/MOZ) family. As to quaternary structure, component of the NuA4 histone acetyltransferase complex. Autoacetylation at Lys-256 is required for proper function.

It localises to the nucleus. The protein resides in the chromosome. It catalyses the reaction L-lysyl-[histone] + acetyl-CoA = N(6)-acetyl-L-lysyl-[histone] + CoA + H(+). The catalysed reaction is L-lysyl-[protein] + acetyl-CoA = N(6)-acetyl-L-lysyl-[protein] + CoA + H(+). The enzyme catalyses 2-hydroxyisobutanoyl-CoA + L-lysyl-[protein] = N(6)-(2-hydroxyisobutanoyl)-L-lysyl-[protein] + CoA + H(+). It carries out the reaction (2E)-butenoyl-CoA + L-lysyl-[protein] = N(6)-(2E)-butenoyl-L-lysyl-[protein] + CoA + H(+). Catalytic component of the NuA4 histone acetyltransferase (HAT) complex which is involved in epigenetic transcriptional activation of selected genes principally by acetylation of nucleosomal histones H4, H3, H2B, H2A and H2A variant H2A.Z. Acetylates histone H4 to form H4K5ac, H4K8ac, H4K12ac and H4K16ac, histone H3 to form H3K14ac, and histone H2A to form H2AK4ac and H2AK7ac. The NuA4 complex is involved in the DNA damage response and is required for chromosome segregation. The NuA4 complex plays a direct role in repair of DNA double-strand breaks (DSBs) through homologous recombination. Recruitment to promoters depends on H3K4me. Also acetylates non-histone proteins. In addition to protein acetyltransferase, can use different acyl-CoA substrates, such as 2-hydroxyisobutanoyl-CoA (2-hydroxyisobutyryl-CoA) or (2E)-butenoyl-CoA (crotonyl-CoA), and is able to mediate protein 2-hydroxyisobutyrylation and crotonylation, respectively. This Kluyveromyces lactis (strain ATCC 8585 / CBS 2359 / DSM 70799 / NBRC 1267 / NRRL Y-1140 / WM37) (Yeast) protein is Histone acetyltransferase ESA1 (ESA1).